An 814-amino-acid polypeptide reads, in one-letter code: Protein kinase C-binding protein NELL2 (814 aa).

The signal sequence occupies residues 1 to 19; that stretch reads MEFILGIFCVIFCLRAGAG. Asparagine 51, asparagine 223, and asparagine 296 each carry an N-linked (GlcNAc...) asparagine glycan. Residues 53–226 enclose the Laminin G-like domain; it reads SKAFLFQDTS…SQCPDLNRTC (174 aa). A VWFC 1 domain is found at 270-329; the sequence is RSCTVKGNIYRELESWMDGCKKCTCTNGTAQCETLTCSVPNCLSGFAPAYVPGKCCKECQ. In terms of domain architecture, EGF-like 1 spans 395 to 437; the sequence is GHDFCSEGHNCVEYSICKNLNDKAVCICRDGFRALREDSAYCE. Intrachain disulfides connect cysteine 399/cysteine 411, cysteine 405/cysteine 420, and cysteine 422/cysteine 436. The Ca(2+) site is built by aspartate 438, isoleucine 439, and glutamate 441. The 42-residue stretch at 438–479 folds into the EGF-like 2; calcium-binding domain; that stretch reads DIDECTEGRHYCRENTVCVNTPGSFMCVCQTGYLKIDDYSCT. Disulfide bonds link cysteine 442–cysteine 455, cysteine 449–cysteine 464, cysteine 466–cysteine 478, cysteine 484–cysteine 497, cysteine 491–cysteine 506, cysteine 508–cysteine 519, cysteine 523–cysteine 533, cysteine 527–cysteine 539, and cysteine 541–cysteine 550. Asparagine 457, threonine 458, and serine 461 together coordinate Ca(2+). The EGF-like 3; calcium-binding domain occupies 480-520; that stretch reads EHNECATNQHSCDENAVCYNTVGGHNCVCQPGYTGNGTVCK. N-linked (GlcNAc...) asparagine glycosylation is present at asparagine 515. One can recognise an EGF-like 4 domain in the interval 521 to 551; sequence AFCTDGCRNGGTCIAPNICACPQGFTGPSCE. Ca(2+) contacts are provided by aspartate 553, isoleucine 554, and glutamate 556. One can recognise an EGF-like 5; calcium-binding domain in the interval 553-599; that stretch reads DIDECTEGFVQCDSRANCINLPGWYHCECRDGYHDNGMFSLSGESCE. 3 cysteine pairs are disulfide-bonded: cysteine 557–cysteine 570, cysteine 564–cysteine 579, and cysteine 581–cysteine 598. Asparagine 572, leucine 573, and tryptophan 576 together coordinate Ca(2+). Ca(2+) is bound by residues aspartate 600, isoleucine 601, and glutamate 603. Residues 600 to 635 enclose the EGF-like 6; calcium-binding domain; that stretch reads DIDECATGRHSCSNDTVCFNLDGGFDCRCPHGKNCS. 3 disulfide bridges follow: cysteine 604/cysteine 617, cysteine 611/cysteine 626, and cysteine 628/cysteine 634. An N-linked (GlcNAc...) asparagine glycan is attached at asparagine 613. Residues asparagine 619, leucine 620, and glycine 623 each contribute to the Ca(2+) site. Asparagine 633 carries N-linked (GlcNAc...) asparagine glycosylation. 2 VWFC domains span residues 636–691 and 696–754; these read GDCT…PECD and SQCL…PRCI.

As to quaternary structure, homotrimer.

It is found in the secreted. Functionally, may regulate neuronal differentiation, polarization and axon guidance. The sequence is that of Protein kinase C-binding protein NELL2 (nell2) from Xenopus tropicalis (Western clawed frog).